A 271-amino-acid chain; its full sequence is MDPLANIKNEINLMNHRISSFATYVNYQLLEFKQSMSNIELMLQENIESKKKTKTDTEPNSPTKPLSTSIPTTTTAATSQSITSTSLSSSSSLSNQIAQPPIINGQVLNSSILTPTSRKKLSLVDIDKNNYNNYNNNNNNNNNNNNNNNNNNNNNNNNNNNNNNNVTTTDKKEGEKNENENENENENENENENENDIIEEDKIIEKMDEELENEQVEPVEQVKPKTQGGRKKVSKLTLDFGIGKRPVRTKTLTQLGIALEKEDTPKKRQRK.

2 disordered regions span residues 50 to 93 and 128 to 233; these read KKKT…SSSL and KNNY…RKKV. 2 stretches are compositionally biased toward low complexity: residues 61-93 and 129-165; these read SPTKPLSTSIPTTTTAATSQSITSTSLSSSSSL and NNYNNYNNNNNNNNNNNNNNNNNNNNNNNNNNNNNNN. Basic and acidic residues predominate over residues 169-179; that stretch reads TDKKEGEKNEN. Composition is skewed to acidic residues over residues 180-199 and 207-217; these read ENENENENENENENENDIIE and MDEELENEQVE.

This is an uncharacterized protein from Dictyostelium discoideum (Social amoeba).